We begin with the raw amino-acid sequence, 407 residues long: Argininosuccinate synthase (407 aa).

Residues 13-21 and alanine 40 each bind ATP; that span reads AYSGGLDTS. Positions 91 and 96 each coordinate L-citrulline. An ATP-binding site is contributed by glycine 121. The L-aspartate site is built by threonine 123, asparagine 127, and aspartate 128. Position 127 (asparagine 127) interacts with L-citrulline. L-citrulline-binding residues include arginine 131, serine 182, serine 191, glutamate 267, and tyrosine 279.

It belongs to the argininosuccinate synthase family. Type 1 subfamily. In terms of assembly, homotetramer.

Its subcellular location is the cytoplasm. It carries out the reaction L-citrulline + L-aspartate + ATP = 2-(N(omega)-L-arginino)succinate + AMP + diphosphate + H(+). It participates in amino-acid biosynthesis; L-arginine biosynthesis; L-arginine from L-ornithine and carbamoyl phosphate: step 2/3. The protein is Argininosuccinate synthase of Mesorhizobium japonicum (strain LMG 29417 / CECT 9101 / MAFF 303099) (Mesorhizobium loti (strain MAFF 303099)).